The primary structure comprises 310 residues: ADP-L-glycero-D-manno-heptose-6-epimerase (310 aa).

Residues 10–11, 31–32, K38, K53, 75–79, and N92 each bind NADP(+); these read FI, DN, and EGACS. Catalysis depends on Y140, which acts as the Proton acceptor. Position 144 (K144) interacts with NADP(+). Substrate is bound at residue N169. Residues V170 and K178 each contribute to the NADP(+) site. Catalysis depends on K178, which acts as the Proton acceptor. Substrate-binding positions include S180, H187, 201–204, and R209; that span reads FEGS. Residue K267 is modified to N6-acetyllysine. Y272 lines the substrate pocket.

The protein belongs to the NAD(P)-dependent epimerase/dehydratase family. HldD subfamily. In terms of assembly, homopentamer. Requires NADP(+) as cofactor. It depends on NAD(+) as a cofactor.

It catalyses the reaction ADP-D-glycero-beta-D-manno-heptose = ADP-L-glycero-beta-D-manno-heptose. It participates in nucleotide-sugar biosynthesis; ADP-L-glycero-beta-D-manno-heptose biosynthesis; ADP-L-glycero-beta-D-manno-heptose from D-glycero-beta-D-manno-heptose 7-phosphate: step 4/4. The protein operates within bacterial outer membrane biogenesis; LPS core biosynthesis. Completely inhibited by ADP and ADP-glucose, and partially inhibited by ATP and NADH. Its function is as follows. Catalyzes the interconversion between ADP-D-glycero-beta-D-manno-heptose and ADP-L-glycero-beta-D-manno-heptose via an epimerization at carbon 6 of the heptose. This chain is ADP-L-glycero-D-manno-heptose-6-epimerase (hldD), found in Escherichia coli (strain K12).